A 101-amino-acid polypeptide reads, in one-letter code: uncharacterized protein (101 aa).

This is an uncharacterized protein from Mycoplasma pneumoniae (strain ATCC 29342 / M129 / Subtype 1) (Mycoplasmoides pneumoniae).